We begin with the raw amino-acid sequence, 152 residues long: Natriuretic peptides A (152 aa).

Positions 1 to 24 are cleaved as a signal peptide; sequence MGSSAITTSFLLFVAFQLPGQTGA. 2 consecutive propeptides follow at residues 25–122 and 92–102; these read NPVY…TAPR and EMGAPSDGDPG. The interval 50–108 is disordered; the sequence is MPLEDEAVPSQVLSEQNEEAGAPLSPLSEVPPWDGGRSTQPREMGAPSDGDPGNPPRSV. At serine 128 the chain carries Phosphoserine. The cysteines at positions 129 and 145 are disulfide-linked. The important for degradation of atrial natriuretic peptide by IDE stretch occupies residues 146–150; the sequence is NSFRY.

It belongs to the natriuretic peptide family. In terms of assembly, homodimer; disulfide-linked antiparallel dimer. The precursor molecule is proteolytically cleaved by CORIN at Arg-122 to produce the atrial natriuretic peptide. Undergoes further proteolytic cleavage by unknown proteases to give rise to long-acting natriuretic peptide, vessel dilator and kaliuretic peptide. Additional processing gives rise to the auriculin and atriopeptin peptides. In the kidneys, alternative processing by an unknown protease results in the peptide urodilatin. In terms of processing, cleavage by MME initiates degradation of the factor and thereby regulates its activity. Degradation by IDE results in reduced activation of NPR1 (in vitro). During IDE degradation, the resulting products can temporarily stimulate NPR2 to produce cGMP, before the fragments are completely degraded and inactivated by IDE (in vitro). Post-translationally, degraded by IDE. Phosphorylation on Ser-128 decreases vasorelaxant activity.

The protein resides in the secreted. Its subcellular location is the perikaryon. It is found in the cell projection. Its function is as follows. Hormone that plays a key role in mediating cardio-renal homeostasis, and is involved in vascular remodeling and regulating energy metabolism. Acts by specifically binding and stimulating NPR1 to produce cGMP, which in turn activates effector proteins, such as PRKG1, that drive various biological responses. Regulates vasodilation, natriuresis, diuresis and aldosterone synthesis and is therefore essential for regulating blood pressure, controlling the extracellular fluid volume and maintaining the fluid-electrolyte balance. Also involved in inhibiting cardiac remodeling and cardiac hypertrophy by inducing cardiomyocyte apoptosis and attenuating the growth of cardiomyocytes and fibroblasts. Plays a role in female pregnancy by promoting trophoblast invasion and spiral artery remodeling in uterus, and thus prevents pregnancy-induced hypertension. In adipose tissue, acts in various cGMP- and PKG-dependent pathways to regulate lipid metabolism and energy homeostasis. This includes up-regulating lipid metabolism and mitochondrial oxygen utilization by activating the AMP-activated protein kinase (AMPK), and increasing energy expenditure by acting via MAPK11 to promote the UCP1-dependent thermogenesis of brown adipose tissue. Binds the clearance receptor NPR3 which removes the hormone from circulation. In terms of biological role, may have a role in cardio-renal homeostasis through regulation of natriuresis, diuresis, vasodilation, and inhibiting aldosterone synthesis. In vitro, promotes the production of cGMP and induces vasodilation. May promote natriuresis, at least in part, by enhancing prostaglandin E2 synthesis resulting in the inhibition of renal Na+-K+-ATPase. However reports on the involvement of this peptide in mammal blood volume and blood pressure homeostasis are conflicting; according to a report, in vivo it is not sufficient to activate cGMP and does not inhibit collecting duct transport nor effect diuresis and natriuresis. Appears to bind to specific receptors that are distinct from the receptors bound by atrial natriuretic peptide and vessel dilator. Possibly enhances protein excretion in urine by decreasing proximal tubular protein reabsorption. May have a role in cardio-renal homeostasis through regulation of natriuresis, diuresis, and vasodilation. In vitro, promotes the production of cGMP and induces vasodilation. May promote natriuresis, at least in part, by enhancing prostaglandin E2 synthesis resulting in the inhibition of renal Na+-K+-ATPase. However reports on the involvement of this peptide in mammal blood volume and blood pressure homeostasis are conflicting; according to a report it is not sufficient to activate cGMP and does not inhibit collecting duct transport nor effect diuresis and natriuresis. Appears to bind to specific receptors that are distinct from the receptors bound by the atrial natriuretic and long-acting natriuretic peptides. Possibly functions in protein excretion in urine by maintaining the integrity of the proximal tubules and enhancing protein excretion by decreasing proximal tubular protein reabsorption. Functionally, may have a role in cardio-renal homeostasis through regulation of diuresis and inhibiting aldosterone synthesis. In vitro, promotes the production of cGMP and induces vasodilation. May promote natriuresis, at least in part, by enhancing prostaglandin E2 synthesis resulting in the inhibition of renal Na+-K+-ATPase. May have a role in potassium excretion but not sodium excretion (natriuresis). Possibly enhances protein excretion in urine by decreasing proximal tubular protein reabsorption. Its function is as follows. Hormone produced in the kidneys that appears to be important for maintaining cardio-renal homeostasis. Mediates vasodilation, natriuresis and diuresis primarily in the renal system, in order to maintain the extracellular fluid volume and control the fluid-electrolyte balance. Specifically binds and stimulates cGMP production by renal transmembrane receptors, likely NPR1. Urodilatin not ANP, may be the natriuretic peptide responsible for the regulation of sodium and water homeostasis in the kidney. In terms of biological role, may have a role in cardio-renal homeostasis through regulation of natriuresis and vasodilation. In vivo promotes natriuresis and in vitro, vasodilates renal artery strips. May have a role in cardio-renal homeostasis through regulation of regulation of natriuresis and vasodilation. In vivo promotes natriuresis. In vitro, vasodilates intestinal smooth muscle but not smooth muscle strips. Functionally, may have a role in cardio-renal homeostasis through regulation of natriuresis and vasodilation. In vivo promotes natriuresis. In vitro, selectively vasodilates intestinal and vascular smooth muscle strips. Its function is as follows. May have a role in cardio-renal homeostasis through regulation of natriuresis and vasodilation. In vivo promotes natriuresis. In vitro, selectively vasodilates intestinal smooth muscle but not vascular smooth muscle strips. The protein is Natriuretic peptides A (NPPA) of Ovis aries (Sheep).